The sequence spans 218 residues: Ribose-5-phosphate isomerase A (218 aa).

Substrate is bound by residues 28–31 (TGST), 81–84 (DGAD), and 94–97 (KGGG). Residue Glu103 is the Proton acceptor of the active site. Position 121 (Lys121) interacts with substrate.

It belongs to the ribose 5-phosphate isomerase family. Homodimer.

It catalyses the reaction aldehydo-D-ribose 5-phosphate = D-ribulose 5-phosphate. It participates in carbohydrate degradation; pentose phosphate pathway; D-ribose 5-phosphate from D-ribulose 5-phosphate (non-oxidative stage): step 1/1. In terms of biological role, catalyzes the reversible conversion of ribose-5-phosphate to ribulose 5-phosphate. This Vibrio atlanticus (strain LGP32) (Vibrio splendidus (strain Mel32)) protein is Ribose-5-phosphate isomerase A.